We begin with the raw amino-acid sequence, 433 residues long: Mg(2+)/citrate complex secondary transporter (433 aa).

The next 12 membrane-spanning stretches (helical) occupy residues 2–22 (LAIL…TKRL), 24–44 (VLTA…FGFT), 60–80 (TAVM…TGLF), 98–118 (IVVG…GSTT), 131–151 (LLLG…MGIM), 176–196 (GPMI…AYVL), 247–267 (VSGK…ALIV), 286–306 (VLAI…LTGT), 324–344 (MGGL…FLMP), 345–365 (NDAY…AYGV), 379–399 (PIHM…LVGV), and 411–431 (WAVL…AISI).

It belongs to the CitM (TC 2.A.11) transporter family.

The protein resides in the cell membrane. The uptake activity increases with increasing Mg(2+) concentrations. Inhibited by FCCP, TCC and nigericin. Functionally, proton motive force-driven secondary transporter that mediates the transport of citrate complexed to Mg(2+). Cotransports at least two protons per Mg(2+)-citrate complex. Can also transport citrate in complex with Ni(2+), Mn(2+), Co(2+), and Zn(2+). The polypeptide is Mg(2+)/citrate complex secondary transporter (citM) (Bacillus subtilis (strain 168)).